The primary structure comprises 355 residues: S-adenosylmethionine:tRNA ribosyltransferase-isomerase (355 aa).

It belongs to the QueA family. Monomer.

It is found in the cytoplasm. It carries out the reaction 7-aminomethyl-7-carbaguanosine(34) in tRNA + S-adenosyl-L-methionine = epoxyqueuosine(34) in tRNA + adenine + L-methionine + 2 H(+). It functions in the pathway tRNA modification; tRNA-queuosine biosynthesis. Transfers and isomerizes the ribose moiety from AdoMet to the 7-aminomethyl group of 7-deazaguanine (preQ1-tRNA) to give epoxyqueuosine (oQ-tRNA). The chain is S-adenosylmethionine:tRNA ribosyltransferase-isomerase from Erwinia tasmaniensis (strain DSM 17950 / CFBP 7177 / CIP 109463 / NCPPB 4357 / Et1/99).